A 98-amino-acid polypeptide reads, in one-letter code: Integration host factor subunit alpha (98 aa).

The protein belongs to the bacterial histone-like protein family. In terms of assembly, heterodimer of an alpha and a beta chain.

Its function is as follows. This protein is one of the two subunits of integration host factor, a specific DNA-binding protein that functions in genetic recombination as well as in transcriptional and translational control. The polypeptide is Integration host factor subunit alpha (Mannheimia succiniciproducens (strain KCTC 0769BP / MBEL55E)).